The sequence spans 131 residues: Small ribosomal subunit protein uS8 (131 aa).

It belongs to the universal ribosomal protein uS8 family. As to quaternary structure, part of the 30S ribosomal subunit. Contacts proteins S5 and S12.

In terms of biological role, one of the primary rRNA binding proteins, it binds directly to 16S rRNA central domain where it helps coordinate assembly of the platform of the 30S subunit. The sequence is that of Small ribosomal subunit protein uS8 from Ruthia magnifica subsp. Calyptogena magnifica.